The primary structure comprises 255 residues: Ribose-5-phosphate isomerase (255 aa).

Belongs to the ribose 5-phosphate isomerase family.

It localises to the cytoplasm. The enzyme catalyses aldehydo-D-ribose 5-phosphate = D-ribulose 5-phosphate. It participates in carbohydrate degradation; pentose phosphate pathway; D-ribose 5-phosphate from D-ribulose 5-phosphate (non-oxidative stage): step 1/1. The sequence is that of Ribose-5-phosphate isomerase (RKI1) from Eremothecium gossypii (strain ATCC 10895 / CBS 109.51 / FGSC 9923 / NRRL Y-1056) (Yeast).